The chain runs to 331 residues: DNA-directed RNA polymerase subunit alpha (331 aa).

The tract at residues M1–R235 is alpha N-terminal domain (alpha-NTD). The tract at residues Q255–F331 is alpha C-terminal domain (alpha-CTD).

The protein belongs to the RNA polymerase alpha chain family. As to quaternary structure, homodimer. The RNAP catalytic core consists of 2 alpha, 1 beta, 1 beta' and 1 omega subunit. When a sigma factor is associated with the core the holoenzyme is formed, which can initiate transcription.

It catalyses the reaction RNA(n) + a ribonucleoside 5'-triphosphate = RNA(n+1) + diphosphate. Functionally, DNA-dependent RNA polymerase catalyzes the transcription of DNA into RNA using the four ribonucleoside triphosphates as substrates. In Rhodopirellula baltica (strain DSM 10527 / NCIMB 13988 / SH1), this protein is DNA-directed RNA polymerase subunit alpha.